Consider the following 412-residue polypeptide: Serine hydroxymethyltransferase (412 aa).

(6S)-5,6,7,8-tetrahydrofolate is bound by residues L117 and 121–123 (GHL). K226 carries the N6-(pyridoxal phosphate)lysine modification. 349–351 (SPF) contacts (6S)-5,6,7,8-tetrahydrofolate.

This sequence belongs to the SHMT family. As to quaternary structure, homodimer. Pyridoxal 5'-phosphate is required as a cofactor.

The protein localises to the cytoplasm. The catalysed reaction is (6R)-5,10-methylene-5,6,7,8-tetrahydrofolate + glycine + H2O = (6S)-5,6,7,8-tetrahydrofolate + L-serine. The protein operates within one-carbon metabolism; tetrahydrofolate interconversion. It participates in amino-acid biosynthesis; glycine biosynthesis; glycine from L-serine: step 1/1. In terms of biological role, catalyzes the reversible interconversion of serine and glycine with tetrahydrofolate (THF) serving as the one-carbon carrier. This reaction serves as the major source of one-carbon groups required for the biosynthesis of purines, thymidylate, methionine, and other important biomolecules. Also exhibits THF-independent aldolase activity toward beta-hydroxyamino acids, producing glycine and aldehydes, via a retro-aldol mechanism. The sequence is that of Serine hydroxymethyltransferase from Halothermothrix orenii (strain H 168 / OCM 544 / DSM 9562).